The chain runs to 438 residues: Glycerol-3-phosphate acyltransferase 3 (438 aa).

Residues 14–34 (WLTLVGGLILLPSAFGLSLGI) traverse the membrane as a helical segment. 2 positions are modified to phosphoserine: S68 and S77. The next 2 membrane-spanning stretches (helical) occupy residues 137-157 (ISPR…CFLL) and 161-181 (VTLA…VGQL). The HXXXXD motif motif lies at 229–234 (HTSPID).

This sequence belongs to the 1-acyl-sn-glycerol-3-phosphate acyltransferase family. Most abundant in epididymal fat, followed by small intestine, brown adipose tissue, kidney, heart and colon.

It is found in the endoplasmic reticulum membrane. The catalysed reaction is sn-glycerol 3-phosphate + an acyl-CoA = a 1-acyl-sn-glycero-3-phosphate + CoA. It catalyses the reaction a 1-acyl-sn-glycero-3-phosphate + an acyl-CoA = a 1,2-diacyl-sn-glycero-3-phosphate + CoA. It carries out the reaction dodecanoyl-CoA + sn-glycerol 3-phosphate = 1-dodecanoyl-sn-glycerol 3-phosphate + CoA. The enzyme catalyses sn-glycerol 3-phosphate + hexadecanoyl-CoA = 1-hexadecanoyl-sn-glycero-3-phosphate + CoA. The catalysed reaction is sn-glycerol 3-phosphate + (9Z)-octadecenoyl-CoA = 1-(9Z-octadecenoyl)-sn-glycero-3-phosphate + CoA. It catalyses the reaction (9Z,12Z)-octadecadienoyl-CoA + sn-glycerol 3-phosphate = 1-(9Z,12Z)-octadecadienoyl-sn-glycero-3-phosphate + CoA. It carries out the reaction 1-tetradecanoyl-sn-glycerol 3-phosphate + (9Z)-octadecenoyl-CoA = 1-tetradecanoyl-2-(9Z)-octadecenoyl-sn-glycero-3-phosphate + CoA. The enzyme catalyses 1-hexadecanoyl-sn-glycero-3-phosphate + (9Z)-octadecenoyl-CoA = 1-hexadecanoyl-2-(9Z-octadecenoyl)-sn-glycero-3-phosphate + CoA. The catalysed reaction is 1-(9Z-octadecenoyl)-sn-glycero-3-phosphate + (9Z)-octadecenoyl-CoA = 1,2-di-(9Z-octadecenoyl)-sn-glycero-3-phosphate + CoA. It catalyses the reaction 1-(6Z,9Z,12Z-octadecatrienoyl)-sn-glycero-3-phosphate + (9Z)-octadecenoyl-CoA = (6Z,9Z,12Z)-octadecatrienoyl-2-(9Z)-octadecenoyl-sn-glycero-3-phosphate + CoA. It carries out the reaction 1-(9Z,12Z,15Z)-octadecatrienoyl-sn-glycero-3-phosphate + (9Z)-octadecenoyl-CoA = 1-(9Z,12Z,15Z)-octadecatrienoyl-2-(9Z)-octadecenoyl-sn-glycero-3-phosphate + CoA. The enzyme catalyses 1-(9Z-octadecenoyl)-sn-glycero-3-phosphate + tetradecanoyl-CoA = 1-(9Z)-octadecenoyl-2-tetradecanoyl-sn-glycero-3-phosphate + CoA. The catalysed reaction is 1-(9Z-octadecenoyl)-sn-glycero-3-phosphate + hexadecanoyl-CoA = 1-(9Z)-octadecenoyl-2-hexadecanoyl-sn-glycero-3-phosphate + CoA. It catalyses the reaction 1-(9Z-octadecenoyl)-sn-glycero-3-phosphate + octadecanoyl-CoA = 1-(9Z-octadecenoyl)-2-octadecanoyl-sn-glycero-3-phosphate + CoA. It carries out the reaction 1-(9Z-octadecenoyl)-sn-glycero-3-phosphate + (9Z,12Z)-octadecadienoyl-CoA = 1-(9Z)-octadecenoyl-2-(9Z,12Z)-octadecadienoyl-sn-glycero-3-phosphate + CoA. The enzyme catalyses 1-(5Z,8Z,11Z,14Z-eicosatetraenoyl)-sn-glycero-3-phosphate + (9Z)-octadecenoyl-CoA = 1-(5Z,8Z,11Z,14Z)-eicosatetraenoyl-2-(9Z)-octadecenoyl-sn-glycero-3-phosphate + CoA. The protein operates within glycerolipid metabolism; triacylglycerol biosynthesis. It functions in the pathway phospholipid metabolism; CDP-diacylglycerol biosynthesis; CDP-diacylglycerol from sn-glycerol 3-phosphate: step 1/3. In terms of biological role, converts glycerol-3-phosphate to 1-acyl-sn-glycerol-3-phosphate (lysophosphatidic acid or LPA) by incorporating an acyl moiety at the sn-1 position of the glycerol backbone. Also converts LPA into 1,2-diacyl-sn-glycerol-3-phosphate (phosphatidic acid or PA) by incorporating an acyl moiety at the sn-2 position of the glycerol backbone. Protects cells against lipotoxicity. This is Glycerol-3-phosphate acyltransferase 3 from Mus musculus (Mouse).